The primary structure comprises 414 residues: Probable cytochrome P450 127A1 (414 aa).

Heme is bound at residue C364.

This sequence belongs to the cytochrome P450 family. It depends on heme as a cofactor.

Cytochromes P450 are a group of heme-thiolate monooxygenases. They oxidize a variety of structurally unrelated compounds, including steroids, fatty acids, and xenobiotics. In Sinorhizobium fredii (strain NBRC 101917 / NGR234), this protein is Probable cytochrome P450 127A1 (cyp127A1).